Consider the following 194-residue polypeptide: Imidazoleglycerol-phosphate dehydratase (194 aa).

This sequence belongs to the imidazoleglycerol-phosphate dehydratase family.

The protein resides in the cytoplasm. The enzyme catalyses D-erythro-1-(imidazol-4-yl)glycerol 3-phosphate = 3-(imidazol-4-yl)-2-oxopropyl phosphate + H2O. It functions in the pathway amino-acid biosynthesis; L-histidine biosynthesis; L-histidine from 5-phospho-alpha-D-ribose 1-diphosphate: step 6/9. The polypeptide is Imidazoleglycerol-phosphate dehydratase (Streptococcus mutans serotype c (strain ATCC 700610 / UA159)).